The primary structure comprises 47 residues: Small, acid-soluble spore protein N (47 aa).

The segment at 1-47 (MSNPKRSPNHFAPNHIGTQPRAAGGNKGKQMQDQSGQHAQVIQTKGE) is disordered. Over residues 29–47 (KQMQDQSGQHAQVIQTKGE) the composition is skewed to polar residues.

The protein belongs to the SspN family.

It localises to the spore core. The chain is Small, acid-soluble spore protein N from Geobacillus thermodenitrificans (strain NG80-2).